The sequence spans 264 residues: Small ribosomal subunit protein uS3 (264 aa).

The region spanning 39-107 (VREYLKKKLK…PVHVNIEEIR (69 aa)) is the KH type-2 domain. Residues 217–264 (EEVAEEKRPRRNARPGDRRPRRDGEGAPAGARRGAPRRGGAGDGKTGE) are disordered. The span at 230-241 (RPGDRRPRRDGE) shows a compositional bias: basic and acidic residues. Positions 253–264 (RRGGAGDGKTGE) are enriched in gly residues.

It belongs to the universal ribosomal protein uS3 family. As to quaternary structure, part of the 30S ribosomal subunit. Forms a tight complex with proteins S10 and S14.

Its function is as follows. Binds the lower part of the 30S subunit head. Binds mRNA in the 70S ribosome, positioning it for translation. The protein is Small ribosomal subunit protein uS3 of Paraburkholderia phymatum (strain DSM 17167 / CIP 108236 / LMG 21445 / STM815) (Burkholderia phymatum).